Consider the following 229-residue polypeptide: Enolase-phosphatase E1 (229 aa).

Belongs to the HAD-like hydrolase superfamily. MasA/MtnC family. Monomer. The cofactor is Mg(2+).

The enzyme catalyses 5-methylsulfanyl-2,3-dioxopentyl phosphate + H2O = 1,2-dihydroxy-5-(methylsulfanyl)pent-1-en-3-one + phosphate. The protein operates within amino-acid biosynthesis; L-methionine biosynthesis via salvage pathway; L-methionine from S-methyl-5-thio-alpha-D-ribose 1-phosphate: step 3/6. It functions in the pathway amino-acid biosynthesis; L-methionine biosynthesis via salvage pathway; L-methionine from S-methyl-5-thio-alpha-D-ribose 1-phosphate: step 4/6. Bifunctional enzyme that catalyzes the enolization of 2,3-diketo-5-methylthiopentyl-1-phosphate (DK-MTP-1-P) into the intermediate 2-hydroxy-3-keto-5-methylthiopentenyl-1-phosphate (HK-MTPenyl-1-P), which is then dephosphorylated to form the acireductone 1,2-dihydroxy-3-keto-5-methylthiopentene (DHK-MTPene). The polypeptide is Enolase-phosphatase E1 (Erwinia tasmaniensis (strain DSM 17950 / CFBP 7177 / CIP 109463 / NCPPB 4357 / Et1/99)).